A 132-amino-acid chain; its full sequence is Small ribosomal subunit protein uS8 (132 aa).

This sequence belongs to the universal ribosomal protein uS8 family. As to quaternary structure, part of the 30S ribosomal subunit. Contacts proteins S5 and S12.

In terms of biological role, one of the primary rRNA binding proteins, it binds directly to 16S rRNA central domain where it helps coordinate assembly of the platform of the 30S subunit. In Lactobacillus johnsonii (strain CNCM I-12250 / La1 / NCC 533), this protein is Small ribosomal subunit protein uS8.